A 494-amino-acid polypeptide reads, in one-letter code: Alanine--glyoxylate aminotransferase 2-like (494 aa).

Lys291 carries the post-translational modification N6-(pyridoxal phosphate)lysine.

It belongs to the class-III pyridoxal-phosphate-dependent aminotransferase family. The cofactor is pyridoxal 5'-phosphate.

This chain is Alanine--glyoxylate aminotransferase 2-like, found in Drosophila melanogaster (Fruit fly).